A 397-amino-acid chain; its full sequence is tRNA(Ile)-lysidine synthase (397 aa).

Position 44-49 (44-49) interacts with ATP; the sequence is SGGADS.

This sequence belongs to the tRNA(Ile)-lysidine synthase family.

It localises to the cytoplasm. The enzyme catalyses cytidine(34) in tRNA(Ile2) + L-lysine + ATP = lysidine(34) in tRNA(Ile2) + AMP + diphosphate + H(+). Its function is as follows. Ligates lysine onto the cytidine present at position 34 of the AUA codon-specific tRNA(Ile) that contains the anticodon CAU, in an ATP-dependent manner. Cytidine is converted to lysidine, thus changing the amino acid specificity of the tRNA from methionine to isoleucine. This chain is tRNA(Ile)-lysidine synthase, found in Rhodopirellula baltica (strain DSM 10527 / NCIMB 13988 / SH1).